A 204-amino-acid polypeptide reads, in one-letter code: Cytochrome c biogenesis ATP-binding export protein CcmA (204 aa).

In terms of domain architecture, ABC transporter spans 3–204 (LSGHGLRCVR…ARELRIGGTT (202 aa)). Residue 35–42 (GPNGAGKT) participates in ATP binding.

This sequence belongs to the ABC transporter superfamily. CcmA exporter (TC 3.A.1.107) family. As to quaternary structure, the complex is composed of two ATP-binding proteins (CcmA) and two transmembrane proteins (CcmB).

Its subcellular location is the cell inner membrane. It carries out the reaction heme b(in) + ATP + H2O = heme b(out) + ADP + phosphate + H(+). In terms of biological role, part of the ABC transporter complex CcmAB involved in the biogenesis of c-type cytochromes; once thought to export heme, this seems not to be the case, but its exact role is uncertain. Responsible for energy coupling to the transport system. This Nitrobacter hamburgensis (strain DSM 10229 / NCIMB 13809 / X14) protein is Cytochrome c biogenesis ATP-binding export protein CcmA.